The sequence spans 969 residues: MTESPTTSPATGSGAAAPDSDAPPYRYTAALAGRIEGSWQDTWAKLGTFNVPNPVGSLAPTDGTPVPEDKLFVQDMFPYPSGEGLHVGHPLGYIATDVYARYFRMTGRNVLHALGFDAFGLPAEQYAVQTGTHPRTRTEANVVNFRRQLGRLGLGHDSRRSFSTTDVEFYKWTQWIFLQIYNAWFDPAANKARPIAELVAEFDSGARSLDDGRNWSELSAGERADVIDSHRLVYRADSMVNWCPGLGTVLANEEVTADGRSDRGNFPVFRKRLRQWMMRITAYSDRLLDDLDLLDWPEPVKTMQRNWIGRSTGAKALFAATGADGAALDIEVFTTRPDTLFGATYMVLAPEHELVDELVAPAWPDGTDPRWTYGAATPGEAVAAYRRAIASKSDLERQESKAKTGVFLGSYATNPTNGKPVPIFIADYVLAGYGTGAIMAVPGHDQRDWDFAHEFGLPIVEVIAGGDISEGAYAGDGLLVNSGYLDGLDVAAAKEAITARLEAEGRGCARVEFKLRDWLFARQRYWGEPFPIVYDSDGRPHALDEAALPVELPDVPDYSPVLFDPDDADSEPSPPLAKATDWVHVELDLGDGLKPYSRDTNVMPQWAGSSWYELRYTDPHNSERFCAKENEAYWMGPRPAEHGPQDPGGVDLYVGGAEHAVLHLLYARFWHKVLYDLGHVSSREPYRRLVNQGYIQAFAYTDSRGSYVPAEEVVERDGRFFYRGPDGEIEVFQEFGKIGKSLKNSISPDEICDDYGADTLRVYEMSMGPLEASRPWATKDVVGAHRFLQRVWRLVVDEQTGETRVVDGAGRDLPTGTLRLLHRTIAGVSEDYAGLRNNTAVAKLIEYTNHLTKEHRDAVPRAAVEPLVLMLAPLAPHMAEELWLRLGHTTSLAHGPFPVADPAYLVEDTVEYPVQVNGKVRGRVTVAADADRDTLEAAALADEKVLAFLAGAQPRKVIVVPGRLVNLVV.

The disordered stretch occupies residues 1-23 (MTESPTTSPATGSGAAAPDSDAP). Residues 78-89 (PYPSGEGLHVGH) carry the 'HIGH' region motif. The 'KMSKS' region motif lies at 737 to 741 (KIGKS). Lys740 contacts ATP.

This sequence belongs to the class-I aminoacyl-tRNA synthetase family.

The protein resides in the cytoplasm. It catalyses the reaction tRNA(Leu) + L-leucine + ATP = L-leucyl-tRNA(Leu) + AMP + diphosphate. The chain is Leucine--tRNA ligase from Mycobacterium avium (strain 104).